The following is a 221-amino-acid chain: Flagellar L-ring protein 1 (221 aa).

The first 16 residues, 1-16, serve as a signal peptide directing secretion; the sequence is MKRFLILTPMVLALCG. C17 carries N-palmitoyl cysteine lipidation. C17 carries S-diacylglycerol cysteine lipidation.

The protein belongs to the FlgH family. The basal body constitutes a major portion of the flagellar organelle and consists of four rings (L,P,S, and M) mounted on a central rod.

It is found in the cell outer membrane. Its subcellular location is the bacterial flagellum basal body. In terms of biological role, assembles around the rod to form the L-ring and probably protects the motor/basal body from shearing forces during rotation. The protein is Flagellar L-ring protein 1 of Yersinia pestis.